The chain runs to 122 residues: Large ribosomal subunit protein bL12 (122 aa).

It belongs to the bacterial ribosomal protein bL12 family. Homodimer. Part of the ribosomal stalk of the 50S ribosomal subunit. Forms a multimeric L10(L12)X complex, where L10 forms an elongated spine to which 2 to 4 L12 dimers bind in a sequential fashion. Binds GTP-bound translation factors.

In terms of biological role, forms part of the ribosomal stalk which helps the ribosome interact with GTP-bound translation factors. Is thus essential for accurate translation. The protein is Large ribosomal subunit protein bL12 of Yersinia pseudotuberculosis serotype O:1b (strain IP 31758).